Here is a 119-residue protein sequence, read N- to C-terminus: Large ribosomal subunit protein bL20 (119 aa).

It belongs to the bacterial ribosomal protein bL20 family.

Binds directly to 23S ribosomal RNA and is necessary for the in vitro assembly process of the 50S ribosomal subunit. It is not involved in the protein synthesizing functions of that subunit. The protein is Large ribosomal subunit protein bL20 of Brevibacillus brevis (strain 47 / JCM 6285 / NBRC 100599).